The chain runs to 415 residues: Fructose-like permease IIC component (415 aa).

Residues Met-1 to Met-46 are Cytoplasmic-facing. Positions Leu-35–Leu-410 constitute a PTS EIIC type-2 domain. A helical membrane pass occupies residues Val-47–Trp-67. Residues Leu-68–Ser-101 are Periplasmic-facing. The helical transmembrane segment at Phe-102–Ile-122 threads the bilayer. Residues Gly-123–Leu-126 lie on the Cytoplasmic side of the membrane. Residues Ala-127 to Phe-147 traverse the membrane as a helical segment. Over Asp-148–Ser-157 the chain is Periplasmic. Residues Ser-158–Val-178 traverse the membrane as a helical segment. Residues Lys-179–Thr-197 lie on the Cytoplasmic side of the membrane. The helical transmembrane segment at Phe-198 to Pro-218 threads the bilayer. Residues Phe-219–Lys-237 are Periplasmic-facing. Residues Gly-238 to Ile-258 traverse the membrane as a helical segment. Over Asn-259–Pro-276 the chain is Cytoplasmic. The helical transmembrane segment at Val-277–Ile-297 threads the bilayer. Over Asp-298 to Ala-318 the chain is Periplasmic. A helical membrane pass occupies residues Met-319–Ile-339. Over Thr-340–Ala-341 the chain is Cytoplasmic. The chain crosses the membrane as a helical span at residues Ile-342–Val-362. The Periplasmic portion of the chain corresponds to Gln-363 to Asn-378. A helical transmembrane segment spans residues Leu-379–Phe-399. The Cytoplasmic portion of the chain corresponds to Leu-400–Leu-415.

It localises to the cell inner membrane. In terms of biological role, the phosphoenolpyruvate-dependent sugar phosphotransferase system (PTS), a major carbohydrate active -transport system, catalyzes the phosphorylation of incoming sugar substrates concomitant with their translocation across the cell membrane. The protein is Fructose-like permease IIC component (fryC) of Escherichia coli O157:H7.